Here is a 273-residue protein sequence, read N- to C-terminus: 2-dehydro-3-deoxyphosphooctonate aldolase (273 aa).

Belongs to the KdsA family.

Its subcellular location is the cytoplasm. The enzyme catalyses D-arabinose 5-phosphate + phosphoenolpyruvate + H2O = 3-deoxy-alpha-D-manno-2-octulosonate-8-phosphate + phosphate. The protein operates within carbohydrate biosynthesis; 3-deoxy-D-manno-octulosonate biosynthesis; 3-deoxy-D-manno-octulosonate from D-ribulose 5-phosphate: step 2/3. It participates in bacterial outer membrane biogenesis; lipopolysaccharide biosynthesis. The sequence is that of 2-dehydro-3-deoxyphosphooctonate aldolase from Citrifermentans bemidjiense (strain ATCC BAA-1014 / DSM 16622 / JCM 12645 / Bem) (Geobacter bemidjiensis).